The sequence spans 535 residues: MTDQTTRLPVRRALISVSDKTGILEFARELQQLGVEILSTGGTYKLLKDNGVNAVEVADYTGFAEMMDGRVKTLHPKIHGGILGRRGTDDAIMNEHGIKPIDLVAVNLYPFEATISKPGCDLPTAIENIDIGGPTMVRSAAKNHKDVAIVVNASDYAGIVEGLKAGGLTYAQRFDLMLKAFEHTAAYDGMIANYMGTIDQAKDTLSTEARSEFPRTFNSQFVKAQEMRYGENPHQSAAFYVEAKKGEASISTAVQLQGKELSFNNVADTDAALECVKSFVKPACVIVKHANPCGVAVVPEDEGGIRKAYDLAYATDTESAFGGIIAFNRELDGETAKAIVDRQFVEVIIAPKISQAARDVVAAKQNVRLLECGEWPAERAAGWDFKRVNGGLLVQSRDIGMITADDLKIVTKRAPTEQEIHDLVFAWKVAKFVKSNAIVYAKQRQTIGVGAGQMSRVNSARIAAIKAEHAGLQVQGAVMASDAFFPFRDGIDNAAKVGISAVIQPGGSMRDAEVIAAADEAGIAMVFTGMRHFRH.

The region spanning 6-151 (TRLPVRRALI…KNHKDVAIVV (146 aa)) is the MGS-like domain.

This sequence belongs to the PurH family.

It carries out the reaction (6R)-10-formyltetrahydrofolate + 5-amino-1-(5-phospho-beta-D-ribosyl)imidazole-4-carboxamide = 5-formamido-1-(5-phospho-D-ribosyl)imidazole-4-carboxamide + (6S)-5,6,7,8-tetrahydrofolate. The catalysed reaction is IMP + H2O = 5-formamido-1-(5-phospho-D-ribosyl)imidazole-4-carboxamide. It participates in purine metabolism; IMP biosynthesis via de novo pathway; 5-formamido-1-(5-phospho-D-ribosyl)imidazole-4-carboxamide from 5-amino-1-(5-phospho-D-ribosyl)imidazole-4-carboxamide (10-formyl THF route): step 1/1. The protein operates within purine metabolism; IMP biosynthesis via de novo pathway; IMP from 5-formamido-1-(5-phospho-D-ribosyl)imidazole-4-carboxamide: step 1/1. This is Bifunctional purine biosynthesis protein PurH from Pseudomonas putida (strain ATCC 700007 / DSM 6899 / JCM 31910 / BCRC 17059 / LMG 24140 / F1).